The chain runs to 417 residues: Sulfite reductase, dissimilatory-type subunit alpha (417 aa).

Cysteine 170, cysteine 176, cysteine 214, cysteine 218, cysteine 264, cysteine 284, cysteine 287, and cysteine 290 together coordinate [4Fe-4S] cluster. Cysteine 218 provides a ligand contact to siroheme.

Requires [4Fe-4S] cluster as cofactor. Siroheme serves as cofactor.

The enzyme catalyses [DsrC protein]-trisulfide + NAD(+) + 3 H2O = [DsrC protein]-dithiol + sulfite + NADH + 3 H(+). Catalyzes the reduction of sulfite to sulfide. This is the terminal oxidation reaction in sulfate respiration. The polypeptide is Sulfite reductase, dissimilatory-type subunit alpha (dsrA) (Allochromatium vinosum (strain ATCC 17899 / DSM 180 / NBRC 103801 / NCIMB 10441 / D) (Chromatium vinosum)).